Here is a 413-residue protein sequence, read N- to C-terminus: Tyrosine--tRNA ligase (413 aa).

The 'HIGH' region signature appears at Pro59–His68. A 'KMSKS' region motif is present at residues Lys243 to Ser247. Lys246 is a binding site for ATP. The S4 RNA-binding domain occupies Leu351–Leu411.

This sequence belongs to the class-I aminoacyl-tRNA synthetase family. TyrS type 2 subfamily. As to quaternary structure, homodimer.

Its subcellular location is the cytoplasm. It carries out the reaction tRNA(Tyr) + L-tyrosine + ATP = L-tyrosyl-tRNA(Tyr) + AMP + diphosphate + H(+). Its function is as follows. Catalyzes the attachment of tyrosine to tRNA(Tyr) in a two-step reaction: tyrosine is first activated by ATP to form Tyr-AMP and then transferred to the acceptor end of tRNA(Tyr). The polypeptide is Tyrosine--tRNA ligase (Burkholderia pseudomallei (strain K96243)).